Here is a 480-residue protein sequence, read N- to C-terminus: Acetyl-coenzyme A carboxylase carboxyl transferase subunit beta, chloroplastic (480 aa).

One can recognise a CoA carboxyltransferase N-terminal domain in the interval 212–480 (LWVQCENCYG…FPLNQINKYK (269 aa)). Positions 216, 219, 235, and 238 each coordinate Zn(2+). The C4-type zinc finger occupies 216–238 (CENCYGLNYQKFFRSKMNICERC).

It belongs to the AccD/PCCB family. As to quaternary structure, acetyl-CoA carboxylase is a heterohexamer composed of biotin carboxyl carrier protein, biotin carboxylase and 2 subunits each of ACCase subunit alpha and ACCase plastid-coded subunit beta (accD). Requires Zn(2+) as cofactor.

It is found in the plastid. It localises to the chloroplast stroma. It catalyses the reaction N(6)-carboxybiotinyl-L-lysyl-[protein] + acetyl-CoA = N(6)-biotinyl-L-lysyl-[protein] + malonyl-CoA. It functions in the pathway lipid metabolism; malonyl-CoA biosynthesis; malonyl-CoA from acetyl-CoA: step 1/1. Functionally, component of the acetyl coenzyme A carboxylase (ACC) complex. Biotin carboxylase (BC) catalyzes the carboxylation of biotin on its carrier protein (BCCP) and then the CO(2) group is transferred by the transcarboxylase to acetyl-CoA to form malonyl-CoA. The chain is Acetyl-coenzyme A carboxylase carboxyl transferase subunit beta, chloroplastic from Illicium oligandrum (Star anise).